The following is a 156-amino-acid chain: Cyclin-dependent protein kinase inhibitor SMR10 (156 aa).

Residues 52–90 (QDQDLEPKSQETNNCSRKEGATVKKEEEEEDDYCKTPTR) form a disordered region. Residues 67-77 (SRKEGATVKKE) show a composition bias toward basic and acidic residues.

Probable cyclin-dependent protein kinase (CDK) inhibitor that functions as a repressor of mitosis in the endoreduplication cell cycle. In Arabidopsis thaliana (Mouse-ear cress), this protein is Cyclin-dependent protein kinase inhibitor SMR10.